The sequence spans 276 residues: MIPNPRVEIGQAVFANDAPLALIAGPCQLESREHAFEMAGRLKEMAEKLGLGFVYKTSFDKANRTSLLGKRGAGLDAALPIFADLRRELGVPVLTDVHTEGQCEILADAVDVLQIPAFLCRQTDLLVAAAKTGKVVNVKKGQFLAPWDMKNVVAKITASGNPNVLTTERGVSFGYNTLVTDMRALPIMAEIGAPVIFDATHSVQQPGGQGSSSGGDRRFVETLARAAVAVGVAGVFIETHQDPDNAPSDGPNMVQLDKMPALLERLMAFDRIAKSK.

This sequence belongs to the KdsA family.

The protein resides in the cytoplasm. The enzyme catalyses D-arabinose 5-phosphate + phosphoenolpyruvate + H2O = 3-deoxy-alpha-D-manno-2-octulosonate-8-phosphate + phosphate. The protein operates within carbohydrate biosynthesis; 3-deoxy-D-manno-octulosonate biosynthesis; 3-deoxy-D-manno-octulosonate from D-ribulose 5-phosphate: step 2/3. It functions in the pathway bacterial outer membrane biogenesis; lipopolysaccharide biosynthesis. This is 2-dehydro-3-deoxyphosphooctonate aldolase from Chelativorans sp. (strain BNC1).